A 723-amino-acid chain; its full sequence is E3 ubiquitin-protein ligase LRSAM1 (723 aa).

6 LRR repeats span residues 30–51, 56–77, 82–103, 105–127, 128–149, and 151–172; these read ADDI…AFAT, QKKV…SCSL, TIKV…LGQL, ALQV…GNLT, QLQT…VGEL, and SLRT…LAHV. At Ser234 the chain carries Phosphoserine. Coiled coils occupy residues 254–380 and 510–562; these read SDYE…TESL and ALSS…KPLS. The tract at residues 282–314 is disordered; that stretch reads TQLLQQSSSQKDEILQTVKEEQSRLEQGLSEHQ. Basic and acidic residues predominate over residues 291–314; the sequence is QKDEILQTVKEEQSRLEQGLSEHQ. In terms of domain architecture, SAM spans 569-632; it reads GMERQLVALL…LRRVQELLDA (64 aa). Position 604 is a phosphoserine (Ser604). The tract at residues 642 to 665 is disordered; the sequence is PMGEVVTPTAPQEPPESVRPSAPP. 2 short sequence motifs (PTAP motif) span residues 649-652 and 661-664; these read PTAP and PSAP. The RING-type zinc-finger motif lies at 675–710; sequence CVVCLEREAQMIFLNCGHVCCCQQCCQPLRTCPLCR.

Interacts with TSG101. Interacts with PHF23. Interacts with FUS. Post-translationally, ubiquitination promoted by PHF23 leads to proteasomal degradation. In terms of tissue distribution, highly expressed in adult spinal cord motoneurons as well as in fetal spinal cord and muscle tissue.

The protein resides in the cytoplasm. It catalyses the reaction S-ubiquitinyl-[E2 ubiquitin-conjugating enzyme]-L-cysteine + [acceptor protein]-L-lysine = [E2 ubiquitin-conjugating enzyme]-L-cysteine + N(6)-ubiquitinyl-[acceptor protein]-L-lysine.. It functions in the pathway protein modification; protein ubiquitination. In terms of biological role, E3 ubiquitin-protein ligase that mediates monoubiquitination of TSG101 at multiple sites, leading to inactivate the ability of TSG101 to sort endocytic (EGF receptors) and exocytic (HIV-1 viral proteins) cargos. Bacterial recognition protein that defends the cytoplasm from invasive pathogens. Localizes to several intracellular bacterial pathogens and generates the bacteria-associated ubiquitin signal leading to autophagy-mediated intracellular bacteria degradation (xenophagy). The polypeptide is E3 ubiquitin-protein ligase LRSAM1 (Homo sapiens (Human)).